A 300-amino-acid polypeptide reads, in one-letter code: Zinc finger CCCH domain-containing protein 14 (300 aa).

The interval 1–38 (MEVGGRKRGKPDGANGAGGKRARESESFQTGVGSKSKP) is disordered. C3H1-type zinc fingers lie at residues 33 to 61 (GSKS…HHFP) and 99 to 127 (TVKT…HGER). The KH domain occupies 170-234 (SATAKISVDA…DQIKNASAMV (65 aa)). Residues 243–262 (GGAPPQGKKPVGGSHRGGGP) form a disordered region. The C3H1-type 3 zinc finger occupies 265–292 (NFKTKLCENFTKGSCTFGDRCHFAHGEN).

The sequence is that of Zinc finger CCCH domain-containing protein 14 from Oryza sativa subsp. japonica (Rice).